A 274-amino-acid chain; its full sequence is Shikimate kinase (274 aa).

86–96 contributes to the ATP binding site; sequence PVGKGLKSSSA.

The protein belongs to the GHMP kinase family. Archaeal shikimate kinase subfamily.

It is found in the cytoplasm. The enzyme catalyses shikimate + ATP = 3-phosphoshikimate + ADP + H(+). It functions in the pathway metabolic intermediate biosynthesis; chorismate biosynthesis; chorismate from D-erythrose 4-phosphate and phosphoenolpyruvate: step 5/7. The chain is Shikimate kinase (aroK) from Pyrococcus abyssi (strain GE5 / Orsay).